Here is a 117-residue protein sequence, read N- to C-terminus: Large ribosomal subunit protein bL20 (117 aa).

This sequence belongs to the bacterial ribosomal protein bL20 family.

Functionally, binds directly to 23S ribosomal RNA and is necessary for the in vitro assembly process of the 50S ribosomal subunit. It is not involved in the protein synthesizing functions of that subunit. The chain is Large ribosomal subunit protein bL20 from Nitratidesulfovibrio vulgaris (strain DSM 19637 / Miyazaki F) (Desulfovibrio vulgaris).